Here is a 492-residue protein sequence, read N- to C-terminus: Solute carrier family 2, facilitated glucose transporter member 1 (492 aa).

An N-acetylmethionine modification is found at Met-1. At Met-1 to Arg-11 the chain is on the cytoplasmic side. Residues Leu-12–Ile-33 form a helical membrane-spanning segment. At Asn-34–Ser-66 the chain is on the extracellular side. N-linked (GlcNAc...) asparagine glycosylation occurs at Asn-45. Residues Leu-67 to Val-87 form a helical membrane-spanning segment. Residues Asn-88–Phe-90 lie on the Cytoplasmic side of the membrane. The helical transmembrane segment at Gly-91–Phe-112 threads the bilayer. The Extracellular segment spans residues Ser-113–Glu-120. Residues Met-121–Val-144 form a helical membrane-spanning segment. A cytochalasin B-binding site is contributed by Thr-137. At Gly-145 to Ala-155 the chain is on the cytoplasmic side. A helical transmembrane segment spans residues Leu-156–Leu-176. Over Asp-177–Leu-185 the chain is Extracellular. The chain crosses the membrane as a helical span at residues Trp-186–Phe-206. The Cytoplasmic portion of the chain corresponds to Cys-207 to Pro-271. The residue at position 226 (Ser-226) is a Phosphoserine; by PKC/PRKCB. The helical transmembrane segment at Ile-272–Tyr-293 threads the bilayer. Gln-282 is a cytochalasin B binding site. D-glucose-binding positions include Gln-282 to Gln-283 and Asn-288. The Extracellular segment spans residues Ser-294–Pro-306. Residues Val-307–Val-328 traverse the membrane as a helical segment. Asn-317 is a binding site for D-glucose. Residues Glu-329 to Arg-334 are Cytoplasmic-facing. Residues Thr-335–Leu-355 traverse the membrane as a helical segment. Over Ala-356 to Ser-365 the chain is Extracellular. The chain crosses the membrane as a helical span at residues Tyr-366–Trp-388. A D-glucose-binding site is contributed by Glu-380. Trp-388 provides a ligand contact to cytochalasin B. Residues Phe-389–Pro-401 are Cytoplasmic-facing. Residues Ala-402–Phe-422 form a helical membrane-spanning segment. Asn-411 is a binding site for cytochalasin B. At Gln-423 to Cys-429 the chain is on the extracellular side. Residues Gly-430–Phe-450 form a helical membrane-spanning segment. Residues Lys-451–Val-492 are Cytoplasmic-facing. Ser-465 is subject to Phosphoserine. Residues Arg-468–Val-492 form a disordered region. Phosphothreonine is present on Thr-478. Ser-490 is modified (phosphoserine).

It belongs to the major facilitator superfamily. Sugar transporter (TC 2.A.1.1) family. Glucose transporter subfamily. Interacts with GIPC (via PDZ domain). Found in a complex with ADD2, DMTN and SLC2A1. Interacts (via C-terminus cytoplasmic region) with DMTN isoform 2. Interacts with SNX27; the interaction is required when endocytosed to prevent degradation in lysosomes and promote recycling to the plasma membrane. Interacts with STOM. Interacts with SGTA (via Gln-rich region). Interacts with isoform 1 of BSG. Phosphorylation at Ser-226 by PKC promotes glucose uptake by increasing cell membrane localization. In terms of tissue distribution, detected in erythrocytes (at protein level). Expressed at variable levels in many human tissues.

The protein resides in the cell membrane. The protein localises to the melanosome. It localises to the photoreceptor inner segment. It catalyses the reaction D-glucose(out) = D-glucose(in). It participates in carbohydrate degradation. Its activity is regulated as follows. The uptake of glucose is inhibited by cytochalasin B and Phe-amide core-scaffold inhibitors GLUT-i1 and GLUT-i2. These inhibitors bind in the central cavity of the inward-open state and overlap the glucose-binding site. Glucose uptake is increased in response to phorbol ester 12-O-tetradecanoylphorbol-13-acetate (TPA) treatment: TPA-induced glucose uptake requires phosphorylation at Ser-226. Interacts with SMIM43; the interaction may promote SLC2A1-mediated glucose transport to meet the energy needs of mesendoderm differentiation. Its function is as follows. Facilitative glucose transporter, which is responsible for constitutive or basal glucose uptake. Has a very broad substrate specificity; can transport a wide range of aldoses including both pentoses and hexoses. Most important energy carrier of the brain: present at the blood-brain barrier and assures the energy-independent, facilitative transport of glucose into the brain. In association with BSG and NXNL1, promotes retinal cone survival by increasing glucose uptake into photoreceptors. Required for mesendoderm differentiation. The protein is Solute carrier family 2, facilitated glucose transporter member 1 of Homo sapiens (Human).